We begin with the raw amino-acid sequence, 225 residues long: MAIKDWPEGEAPREKLLSQGVKQLSDAELLAVLLRVGLKGLSAVELARIMINEFGGLRSLLNASQAQVCRLDGIGPVKFAQMQAAVELGARISQENLKRGKILSDPDLTRDYLMRQLSDRAYEVFAILLLDSQHRVIQFVELFRGTINSASVYPREVVSLVLEKKAAAVIVCHNHPSGIAEPSTADRRITERLKQALQTIDVSLLDHMVVGDREIVSFAERGWID.

One can recognise an MPN domain in the interval 102–224 (ILSDPDLTRD…IVSFAERGWI (123 aa)). 3 residues coordinate Zn(2+): histidine 173, histidine 175, and aspartate 186. The short motif at 173–186 (HNHPSGIAEPSTAD) is the JAMM motif element.

Belongs to the UPF0758 family.

This is UPF0758 protein Spea_3837 from Shewanella pealeana (strain ATCC 700345 / ANG-SQ1).